Reading from the N-terminus, the 720-residue chain is Denticleless protein homolog (720 aa).

WD repeat units follow at residues 43 to 85, 92 to 131, and 134 to 174; these read GMPV…TTKL, AHSN…LLGI, and GHQC…KDGF. Positions 164-167 match the DDB1-binding motif motif; the sequence is WDTR. The Nuclear localization signal signature appears at 193–200; that stretch reads PSKLRKKR. WD repeat units lie at residues 211 to 250, 266 to 305, 310 to 351, and 355 to 395; these read DFQQ…AAYR, TRKL…TFPV, GHQN…LPPR, and GHSQ…EEEK. Residues 240–243 carry the DDB1-binding motif motif; the sequence is WDLR. 4 disordered regions span residues 411–437, 476–495, 528–552, and 607–698; these read KPEE…VGSP, PAKL…PSSK, QSLL…KRRL, and NEHE…TSPK. Polar residues predominate over residues 528-542; it reads QSLLETSSTPKAQHS. 2 stretches are compositionally biased toward basic and acidic residues: residues 543 to 552 and 642 to 660; these read QAEKRAKRRL and CERD…ERKN.

It belongs to the WD repeat cdt2 family. Component of the DCX(DTL) E3 ubiquitin ligase complex, at least composed of CUL4 (CUL4A or CUL4B), DDB1, DTL/CDT2 and RBX1.

Its subcellular location is the nucleus. It is found in the cytoplasm. The protein resides in the cytoskeleton. The protein localises to the microtubule organizing center. It localises to the centrosome. Its subcellular location is the chromosome. The protein operates within protein modification; protein ubiquitination. Functionally, substrate-specific adapter of a DCX (DDB1-CUL4-X-box) E3 ubiquitin-protein ligase complex required for cell cycle control, DNA damage response and translesion DNA synthesis. The DCX(DTL) complex, also named CRL4(CDT2) complex, mediates the polyubiquitination and subsequent degradation of CDT1, CDKN1A/p21(CIP1), KMT5A and SDE2. CDT1 degradation in response to DNA damage is necessary to ensure proper cell cycle regulation of DNA replication. CDKN1A/p21(CIP1) degradation during S phase or following UV irradiation is essential to control replication licensing. KMT5A degradation is also important for a proper regulation of mechanisms such as TGF-beta signaling, cell cycle progression, DNA repair and cell migration. Most substrates require their interaction with PCNA for their polyubiquitination: substrates interact with PCNA via their PIP-box, and those containing the 'K+4' motif in the PIP box, recruit the DCX(DTL) complex, leading to their degradation. In undamaged proliferating cells, the DCX(DTL) complex also promotes the 'Lys-164' monoubiquitination of PCNA, thereby being involved in PCNA-dependent translesion DNA synthesis. May play a role in the regulation of the circadian clock. The polypeptide is Denticleless protein homolog (DTL) (Gallus gallus (Chicken)).